The following is a 379-amino-acid chain: Dual-specificity RNA methyltransferase RlmN (379 aa).

The active-site Proton acceptor is the glutamate 90. Residues 96–348 (EPNRGTLCVS…TTVRKTRGDD (253 aa)) enclose the Radical SAM core domain. Cysteine 103 and cysteine 353 are joined by a disulfide. [4Fe-4S] cluster-binding residues include cysteine 110, cysteine 114, and cysteine 117. Residues 179 to 180 (GE), serine 211, 233 to 235 (SLH), and asparagine 310 each bind S-adenosyl-L-methionine. The active-site S-methylcysteine intermediate is the cysteine 353.

Belongs to the radical SAM superfamily. RlmN family. The cofactor is [4Fe-4S] cluster.

The protein localises to the cytoplasm. It catalyses the reaction adenosine(2503) in 23S rRNA + 2 reduced [2Fe-2S]-[ferredoxin] + 2 S-adenosyl-L-methionine = 2-methyladenosine(2503) in 23S rRNA + 5'-deoxyadenosine + L-methionine + 2 oxidized [2Fe-2S]-[ferredoxin] + S-adenosyl-L-homocysteine. The catalysed reaction is adenosine(37) in tRNA + 2 reduced [2Fe-2S]-[ferredoxin] + 2 S-adenosyl-L-methionine = 2-methyladenosine(37) in tRNA + 5'-deoxyadenosine + L-methionine + 2 oxidized [2Fe-2S]-[ferredoxin] + S-adenosyl-L-homocysteine. Its function is as follows. Specifically methylates position 2 of adenine 2503 in 23S rRNA and position 2 of adenine 37 in tRNAs. m2A2503 modification seems to play a crucial role in the proofreading step occurring at the peptidyl transferase center and thus would serve to optimize ribosomal fidelity. The chain is Dual-specificity RNA methyltransferase RlmN from Nitrosomonas eutropha (strain DSM 101675 / C91 / Nm57).